Reading from the N-terminus, the 271-residue chain is Plasmanylethanolamine desaturase 1 (271 aa).

The disordered stretch occupies residues 1 to 25 (MAGAEDAPGRQPELDEDETAEGRRW). A run of 3 helical transmembrane segments spans residues 48-68 (WCSV…LLLL), 75-95 (PLVI…SGLV), and 166-186 (LYPW…TNQI). Positions 187-191 (HKWSH) match the Histidine box-1 motif. The Histidine box-2 motif lies at 214 to 218 (HHRIH).

The protein belongs to the fatty acid desaturase CarF family.

The protein resides in the endoplasmic reticulum membrane. The enzyme catalyses a 1-(1,2-saturated alkyl)-2-acyl-sn-glycero-3-phosphoethanolamine + 2 Fe(II)-[cytochrome b5] + O2 + 2 H(+) = a 1-O-(1Z-alkenyl)-2-acyl-sn-glycero-3-phosphoethanolamine + 2 Fe(III)-[cytochrome b5] + 2 H2O. It catalyses the reaction a 1-O-hexadecyl-2-acyl-sn-glycero-3-phosphoethanolamine + 2 Fe(II)-[cytochrome b5] + O2 + 2 H(+) = a 1-O-(1Z-hexadecenyl)-2-acyl-sn-glycero-3-phosphoethanolamine + 2 Fe(III)-[cytochrome b5] + 2 H2O. The catalysed reaction is a 1-O-octadecyl-2-acyl-sn-glycero-3-phosphoethanolamine + 2 Fe(II)-[cytochrome b5] + O2 + 2 H(+) = a 1-O-(1Z-octadecenyl)-2-acyl-sn-glycero-3-phosphoethanolamine + 2 Fe(III)-[cytochrome b5] + 2 H2O. It carries out the reaction a 1-O-(9Z-octadecenyl)-2-acyl-sn-glycero-3-phosphoethanolamine + 2 Fe(II)-[cytochrome b5] + O2 + 2 H(+) = a 1-O-(1Z,9Z-octadecadienyl)-2-acyl-sn-glycero-3-phosphoethanolamine + 2 Fe(III)-[cytochrome b5] + 2 H2O. It functions in the pathway lipid metabolism; fatty acid metabolism. Functionally, plasmanylethanolamine desaturase involved in plasmalogen biogenesis in the endoplasmic reticulum membrane. Plasmalogens are glycerophospholipids with a hydrocarbon chain linked by a vinyl ether bond at the glycerol sn-1 position, and are involved in antioxidative and signaling mechanisms. This is Plasmanylethanolamine desaturase 1 from Mus musculus (Mouse).